Here is a 542-residue protein sequence, read N- to C-terminus: Glutamyl-tRNA(Gln) amidotransferase subunit B, mitochondrial (542 aa).

The protein belongs to the GatB/GatE family. GatB subfamily. Subunit of the heterotrimeric GatFAB amidotransferase (AdT) complex, composed of A, B and F subunits.

It is found in the mitochondrion. The catalysed reaction is L-glutamyl-tRNA(Gln) + L-glutamine + ATP + H2O = L-glutaminyl-tRNA(Gln) + L-glutamate + ADP + phosphate + H(+). Its function is as follows. Allows the formation of correctly charged Gln-tRNA(Gln) through the transamidation of misacylated Glu-tRNA(Gln) in the mitochondria. The reaction takes place in the presence of glutamine and ATP through an activated gamma-phospho-Glu-tRNA(Gln). The sequence is that of Glutamyl-tRNA(Gln) amidotransferase subunit B, mitochondrial from Candida glabrata (strain ATCC 2001 / BCRC 20586 / JCM 3761 / NBRC 0622 / NRRL Y-65 / CBS 138) (Yeast).